Reading from the N-terminus, the 410-residue chain is Class E basic helix-loop-helix protein 41 (410 aa).

Residue Lys31 forms a Glycyl lysine isopeptide (Lys-Gly) (interchain with G-Cter in SUMO2) linkage. In terms of domain architecture, bHLH spans Thr44 to Leu99. A Glycyl lysine isopeptide (Lys-Gly) (interchain with G-Cter in SUMO2) cross-link involves residue Lys121. The 36-residue stretch at Phe131–Leu166 folds into the Orange domain. Disordered regions lie at residues Ile209–Lys255 and Gly360–Pro410. A Glycyl lysine isopeptide (Lys-Gly) (interchain with G-Cter in SUMO2) cross-link involves residue Lys240.

In terms of assembly, homodimer. Heterodimer with BHLHE40/DEC1. Interacts with CIART. Interacts with BMAL1. Interacts with RXRA. Interacts with NR0B2 and HNF1A. In terms of tissue distribution, expressed in skeletal muscle, brain and lung.

Its subcellular location is the nucleus. Transcriptional repressor involved in the regulation of the circadian rhythm by negatively regulating the activity of the clock genes and clock-controlled genes. Acts as the negative limb of a novel autoregulatory feedback loop (DEC loop) which differs from the one formed by the PER and CRY transcriptional repressors (PER/CRY loop). Both these loops are interlocked as it represses the expression of PER1 and in turn is repressed by PER1/2 and CRY1/2. Represses the activity of the circadian transcriptional activator: CLOCK-BMAL1 heterodimer by competing for the binding to E-box elements (5'-CACGTG-3') found within the promoters of its target genes. Negatively regulates its own expression and the expression of DBP and BHLHE41/DEC2. Acts as a corepressor of RXR and the RXR-LXR heterodimers and represses the ligand-induced RXRA/B/G, NR1H3/LXRA, NR1H4 and VDR transactivation activity. Inhibits HNF1A-mediated transactivation of CYP1A2, CYP2E1 and CYP3A11. This is Class E basic helix-loop-helix protein 41 (Bhlhe41) from Mus musculus (Mouse).